Here is a 180-residue protein sequence, read N- to C-terminus: ATP synthase subunit delta (180 aa).

It belongs to the ATPase delta chain family. As to quaternary structure, F-type ATPases have 2 components, F(1) - the catalytic core - and F(0) - the membrane proton channel. F(1) has five subunits: alpha(3), beta(3), gamma(1), delta(1), epsilon(1). F(0) has three main subunits: a(1), b(2) and c(10-14). The alpha and beta chains form an alternating ring which encloses part of the gamma chain. F(1) is attached to F(0) by a central stalk formed by the gamma and epsilon chains, while a peripheral stalk is formed by the delta and b chains.

It localises to the cell inner membrane. Its function is as follows. F(1)F(0) ATP synthase produces ATP from ADP in the presence of a proton or sodium gradient. F-type ATPases consist of two structural domains, F(1) containing the extramembraneous catalytic core and F(0) containing the membrane proton channel, linked together by a central stalk and a peripheral stalk. During catalysis, ATP synthesis in the catalytic domain of F(1) is coupled via a rotary mechanism of the central stalk subunits to proton translocation. Functionally, this protein is part of the stalk that links CF(0) to CF(1). It either transmits conformational changes from CF(0) to CF(1) or is implicated in proton conduction. The sequence is that of ATP synthase subunit delta from Paracidovorax citrulli (strain AAC00-1) (Acidovorax citrulli).